Consider the following 430-residue polypeptide: Adenylosuccinate synthetase (430 aa).

GTP contacts are provided by residues 13–19 (GDEGKGK) and 41–43 (GHT). The active-site Proton acceptor is the Asp-14. Asp-14 and Gly-41 together coordinate Mg(2+). IMP contacts are provided by residues 14–17 (DEGK), 39–42 (NAGH), Thr-130, Arg-144, Gln-225, Thr-240, and Arg-304. Catalysis depends on His-42, which acts as the Proton donor. Residue 300-306 (ATTGRAR) coordinates substrate. GTP is bound by residues Arg-306, 332-334 (KLD), and 414-416 (STG).

It belongs to the adenylosuccinate synthetase family. As to quaternary structure, homodimer. It depends on Mg(2+) as a cofactor.

The protein localises to the cytoplasm. The enzyme catalyses IMP + L-aspartate + GTP = N(6)-(1,2-dicarboxyethyl)-AMP + GDP + phosphate + 2 H(+). The protein operates within purine metabolism; AMP biosynthesis via de novo pathway; AMP from IMP: step 1/2. Functionally, plays an important role in the de novo pathway of purine nucleotide biosynthesis. Catalyzes the first committed step in the biosynthesis of AMP from IMP. This Pseudomonas paraeruginosa (strain DSM 24068 / PA7) (Pseudomonas aeruginosa (strain PA7)) protein is Adenylosuccinate synthetase.